A 224-amino-acid chain; its full sequence is UPF0319 protein VC_1853 (224 aa).

Positions 1 to 21 are cleaved as a signal peptide; the sequence is MKLNPLILGLLLSFSAGHSLA.

Belongs to the UPF0319 family.

The protein is UPF0319 protein VC_1853 of Vibrio cholerae serotype O1 (strain ATCC 39315 / El Tor Inaba N16961).